Here is a 200-residue protein sequence, read N- to C-terminus: Cysteine-rich venom protein VAR8 (200 aa).

The first 22 residues, 1–22 (MILLKLYLTLAAILCQSRGTTS), serve as a signal peptide directing secretion. The SCP domain maps to 41-169 (NKHNDLRRTV…PLKYFLVCQY (129 aa)). 4 disulfide bridges follow: Cys77/Cys156, Cys95/Cys170, Cys151/Cys167, and Cys189/Cys196.

Belongs to the CRISP family. Post-translationally, contains 8 disulfide bonds. In terms of tissue distribution, expressed by the venom gland.

The protein localises to the secreted. Its function is as follows. Blocks ryanodine receptors, and potassium channels. The polypeptide is Cysteine-rich venom protein VAR8 (Varanus acanthurus (Ridge-tailed monitor)).